The chain runs to 256 residues: Large ribosomal subunit protein eL8B (256 aa).

Residues 1–37 (MAPGKKVAPAPFGAKSTKSNKAKNPLTHSTPKNFGIG) form a disordered region.

The protein belongs to the eukaryotic ribosomal protein eL8 family. Component of the large ribosomal subunit (LSU). Mature yeast ribosomes consist of a small (40S) and a large (60S) subunit. The 40S small subunit contains 1 molecule of ribosomal RNA (18S rRNA) and 33 different proteins (encoded by 57 genes). The large 60S subunit contains 3 rRNA molecules (25S, 5.8S and 5S rRNA) and 46 different proteins (encoded by 81 genes).

The protein localises to the cytoplasm. Functionally, component of the ribosome, a large ribonucleoprotein complex responsible for the synthesis of proteins in the cell. The small ribosomal subunit (SSU) binds messenger RNAs (mRNAs) and translates the encoded message by selecting cognate aminoacyl-transfer RNA (tRNA) molecules. The large subunit (LSU) contains the ribosomal catalytic site termed the peptidyl transferase center (PTC), which catalyzes the formation of peptide bonds, thereby polymerizing the amino acids delivered by tRNAs into a polypeptide chain. The nascent polypeptides leave the ribosome through a tunnel in the LSU and interact with protein factors that function in enzymatic processing, targeting, and the membrane insertion of nascent chains at the exit of the ribosomal tunnel. This Saccharomyces cerevisiae (strain ATCC 204508 / S288c) (Baker's yeast) protein is Large ribosomal subunit protein eL8B.